The sequence spans 138 residues: Putative thioredoxin-like protein 453L (138 aa).

The region spanning Gln3 to Gly138 is the Thioredoxin domain. Residues Cys44 and Cys47 each act as nucleophile in the active site. A disulfide bond links Cys44 and Cys47.

This sequence belongs to the thioredoxin family.

Functionally, participates in various redox reactions through the reversible oxidation of its active center dithiol to a disulfide and catalyzes dithiol-disulfide exchange reactions. The sequence is that of Putative thioredoxin-like protein 453L from Acheta domesticus (House cricket).